A 222-amino-acid polypeptide reads, in one-letter code: Latexin (222 aa).

Residues 1–97 (MEIPPTHYAA…NFTFEGEIGK (97 aa)) form the Cystatin LXN-type 1 domain. Residue Lys55 is modified to N6-acetyllysine. Residues 98–117 (NPDEEDNTFYQSLMSLKRPL) form an alpha-helical linker region. Positions 118-222 (EAQDIPDNFG…SRLPKEGQAE (105 aa)) constitute a Cystatin LXN-type 2 domain.

Belongs to the protease inhibitor I47 (latexin) family. As to expression, highly enriched in macrophages.

Its subcellular location is the cytoplasm. Hardly reversible, non-competitive, and potent inhibitor of CPA1, CPA2 and CPA4. May play a role in inflammation. The chain is Latexin (Lxn) from Mus musculus (Mouse).